The primary structure comprises 284 residues: Homeobox protein SIX1 (284 aa).

A DNA-binding region (homeobox) is located at residues 124–183 (GEETSYCFKEKSRGVLREWYAHNPYPSPREKRELAEATGLTTTQVSNWFKNRRQRDRAAE). The disordered stretch occupies residues 168-269 (VSNWFKNRRQ…LQTHQHQLQD (102 aa)). Residues 179 to 190 (DRAAEAKERENT) show a composition bias toward basic and acidic residues. Over residues 242–269 (RSSNYSLPGLTASQPSHGLQTHQHQLQD) the composition is skewed to polar residues.

The protein belongs to the SIX/Sine oculis homeobox family. As to quaternary structure, interacts with DACH1. Interacts with EYA1. Interacts with EYA2. Interacts with CDH1. Interacts with TBX18. Interacts with CEBPA. Interacts with CEBPB. Interacts with EBF2. In terms of processing, phosphorylated during interphase; becomes hyperphosphorylated during mitosis. Hyperphosphorylation impairs binding to promoter elements. Ubiquitinated by the anaphase promoting complex (APC), leading to its proteasomal degradation. Specifically expressed in skeletal muscle.

It localises to the nucleus. The protein resides in the cytoplasm. Transcription factor that is involved in the regulation of cell proliferation, apoptosis and embryonic development. Plays an important role in the development of several organs, including kidney, muscle and inner ear. Depending on context, functions as a transcriptional repressor or activator. Lacks an activation domain, and requires interaction with EYA family members for transcription activation. Mediates nuclear translocation of EYA1 and EYA2. Binds the 5'-TCA[AG][AG]TTNC-3' motif present in the MEF3 element in the MYOG promoter and CIDEA enhancer. Regulates the expression of numerous genes, including MYC, CCND1 and EZR. Acts as an activator of the IGFBP5 promoter, probably coactivated by EYA2. Repression of precursor cell proliferation in myoblasts is switched to activation through recruitment of EYA3 to the SIX1-DACH1 complex. During myogenesis, seems to act together with EYA2 and DACH2. Regulates the expression of CCNA1. Promotes brown adipocyte differentiation. This is Homeobox protein SIX1 (SIX1) from Homo sapiens (Human).